The sequence spans 313 residues: Adhesin MafA 2 (313 aa).

A signal peptide spans 1–14; the sequence is MKTLLLLIPLVLTA. Cysteine 15 carries N-palmitoyl cysteine lipidation. Cysteine 15 is lipidated: S-diacylglycerol cysteine. Polar residues predominate over residues 282–297; that stretch reads GDTTAQNRPDFKQNNG. Residues 282 to 313 are disordered; the sequence is GDTTAQNRPDFKQNNGKKPDVGNEVIRRRKGG.

Belongs to the MafA family.

The protein resides in the cell outer membrane. This Neisseria meningitidis serogroup C / serotype 2a (strain ATCC 700532 / DSM 15464 / FAM18) protein is Adhesin MafA 2 (mafA2).